Here is a 224-residue protein sequence, read N- to C-terminus: Small ribosomal subunit protein uS3 (224 aa).

The 69-residue stretch at 39–107 (IREFLKKKPS…DVWVEIAEVK (69 aa)) folds into the KH type-2 domain.

The protein belongs to the universal ribosomal protein uS3 family. In terms of assembly, part of the 30S ribosomal subunit. Forms a tight complex with proteins S10 and S14.

Functionally, binds the lower part of the 30S subunit head. Binds mRNA in the 70S ribosome, positioning it for translation. This Chlamydia trachomatis serovar A (strain ATCC VR-571B / DSM 19440 / HAR-13) protein is Small ribosomal subunit protein uS3.